Consider the following 353-residue polypeptide: Photosystem II D2 protein (353 aa).

The residue at position 2 (Thr2) is an N-acetylthreonine. Thr2 is modified (phosphothreonine). The chain crosses the membrane as a helical span at residues 41-61 (CAYFALGGWFTGTTFVTSWYT). His118 provides a ligand contact to chlorophyll a. A helical membrane pass occupies residues 125–141 (GFMLRQFELARSVQLRP). Residues Gln130 and Asn143 each coordinate pheophytin a. Residues 153 to 166 (VFVSVFLIYPLGQS) form a helical membrane-spanning segment. Residue His198 participates in chlorophyll a binding. Residues 208–228 (AALLCAIHGATVENTLFEDGD) traverse the membrane as a helical segment. His215 and Phe262 together coordinate a plastoquinone. His215 is a Fe cation binding site. His269 lines the Fe cation pocket. The helical transmembrane segment at 279–295 (GLWMSALGVVGLALNLR) threads the bilayer.

It belongs to the reaction center PufL/M/PsbA/D family. In terms of assembly, PSII is composed of 1 copy each of membrane proteins PsbA, PsbB, PsbC, PsbD, PsbE, PsbF, PsbH, PsbI, PsbJ, PsbK, PsbL, PsbM, PsbT, PsbX, PsbY, PsbZ, Psb30/Ycf12, at least 3 peripheral proteins of the oxygen-evolving complex and a large number of cofactors. It forms dimeric complexes. The D1/D2 heterodimer binds P680, chlorophylls that are the primary electron donor of PSII, and subsequent electron acceptors. It shares a non-heme iron and each subunit binds pheophytin, quinone, additional chlorophylls, carotenoids and lipids. There is also a Cl(-1) ion associated with D1 and D2, which is required for oxygen evolution. The PSII complex binds additional chlorophylls, carotenoids and specific lipids. is required as a cofactor.

The protein resides in the plastid. It is found in the chloroplast thylakoid membrane. The enzyme catalyses 2 a plastoquinone + 4 hnu + 2 H2O = 2 a plastoquinol + O2. Photosystem II (PSII) is a light-driven water:plastoquinone oxidoreductase that uses light energy to abstract electrons from H(2)O, generating O(2) and a proton gradient subsequently used for ATP formation. It consists of a core antenna complex that captures photons, and an electron transfer chain that converts photonic excitation into a charge separation. The D1/D2 (PsbA/PsbD) reaction center heterodimer binds P680, the primary electron donor of PSII as well as several subsequent electron acceptors. D2 is needed for assembly of a stable PSII complex. This chain is Photosystem II D2 protein, found in Chloranthus spicatus (Chulantree).